The following is a 595-amino-acid chain: Sulfite reductase [NADPH] flavoprotein alpha-component (595 aa).

The Flavodoxin-like domain maps to 59–197 (ITVLSASQTG…KADIWRREIV (139 aa)). FMN is bound by residues 65 to 70 (SQTGNA), 112 to 115 (STQG), and 148 to 157 (LGDSSYTYFA). The 215-residue stretch at 230–444 (EEPFTAHLVV…IEHNDNFRLP (215 aa)) folds into the FAD-binding FR-type domain. FAD contacts are provided by residues Thr-318, Phe-352, 382–385 (RLYS), 400–402 (TVS), Tyr-406, and 415–418 (GGAS). NADP(+) contacts are provided by residues 515–516 (SQ), 521–525 (KIYVQ), and Asp-557. Residue Tyr-595 participates in FAD binding.

It belongs to the NADPH-dependent sulphite reductase flavoprotein subunit CysJ family. This sequence in the N-terminal section; belongs to the flavodoxin family. In the C-terminal section; belongs to the flavoprotein pyridine nucleotide cytochrome reductase family. In terms of assembly, alpha(8)-beta(8). The alpha component is a flavoprotein, the beta component is a hemoprotein. FAD serves as cofactor. It depends on FMN as a cofactor.

The enzyme catalyses hydrogen sulfide + 3 NADP(+) + 3 H2O = sulfite + 3 NADPH + 4 H(+). It functions in the pathway sulfur metabolism; hydrogen sulfide biosynthesis; hydrogen sulfide from sulfite (NADPH route): step 1/1. Its function is as follows. Component of the sulfite reductase complex that catalyzes the 6-electron reduction of sulfite to sulfide. This is one of several activities required for the biosynthesis of L-cysteine from sulfate. The flavoprotein component catalyzes the electron flow from NADPH -&gt; FAD -&gt; FMN to the hemoprotein component. This Baumannia cicadellinicola subsp. Homalodisca coagulata protein is Sulfite reductase [NADPH] flavoprotein alpha-component.